A 376-amino-acid polypeptide reads, in one-letter code: uncharacterized protein (376 aa).

It belongs to the YCR102c/YLR460c/YNL134c family.

This is an uncharacterized protein from Saccharomyces cerevisiae (strain ATCC 204508 / S288c) (Baker's yeast).